Consider the following 204-residue polypeptide: Thymidylate kinase (204 aa).

11–18 (GLDKSGKT) is a binding site for ATP.

This sequence belongs to the thymidylate kinase family.

It carries out the reaction dTMP + ATP = dTDP + ADP. Its pathway is pyrimidine metabolism; dTTP biosynthesis. The polypeptide is Thymidylate kinase (TMK) (Vaccinia virus (strain Ankara) (VACV)).